We begin with the raw amino-acid sequence, 380 residues long: Cytochrome b (380 aa).

4 consecutive transmembrane segments (helical) span residues 33 to 53 (FGSL…FLAM), 77 to 98 (WLIR…FLHV), 113 to 133 (WNMG…GYVL), and 178 to 198 (FFAF…VHLL). Heme b is bound by residues His83 and His97. Heme b contacts are provided by His182 and His196. His201 serves as a coordination point for a ubiquinone. 4 helical membrane-spanning segments follow: residues 226–246 (IKDF…TLFF), 288–308 (LGGV…PLLH), 320–340 (ITQT…WIGG), and 347–367 (FIII…ILMP).

The protein belongs to the cytochrome b family. As to quaternary structure, the cytochrome bc1 complex contains 11 subunits: 3 respiratory subunits (MT-CYB, CYC1 and UQCRFS1), 2 core proteins (UQCRC1 and UQCRC2) and 6 low-molecular weight proteins (UQCRH/QCR6, UQCRB/QCR7, UQCRQ/QCR8, UQCR10/QCR9, UQCR11/QCR10 and a cleavage product of UQCRFS1). This cytochrome bc1 complex then forms a dimer. Heme b is required as a cofactor.

The protein localises to the mitochondrion inner membrane. Component of the ubiquinol-cytochrome c reductase complex (complex III or cytochrome b-c1 complex) that is part of the mitochondrial respiratory chain. The b-c1 complex mediates electron transfer from ubiquinol to cytochrome c. Contributes to the generation of a proton gradient across the mitochondrial membrane that is then used for ATP synthesis. The polypeptide is Cytochrome b (MT-CYB) (Microtus guentheri (Gunther's vole)).